A 571-amino-acid polypeptide reads, in one-letter code: Proline--tRNA ligase (571 aa).

The protein belongs to the class-II aminoacyl-tRNA synthetase family. ProS type 1 subfamily. Homodimer.

The protein localises to the cytoplasm. It carries out the reaction tRNA(Pro) + L-proline + ATP = L-prolyl-tRNA(Pro) + AMP + diphosphate. Catalyzes the attachment of proline to tRNA(Pro) in a two-step reaction: proline is first activated by ATP to form Pro-AMP and then transferred to the acceptor end of tRNA(Pro). As ProRS can inadvertently accommodate and process non-cognate amino acids such as alanine and cysteine, to avoid such errors it has two additional distinct editing activities against alanine. One activity is designated as 'pretransfer' editing and involves the tRNA(Pro)-independent hydrolysis of activated Ala-AMP. The other activity is designated 'posttransfer' editing and involves deacylation of mischarged Ala-tRNA(Pro). The misacylated Cys-tRNA(Pro) is not edited by ProRS. This Leuconostoc citreum (strain KM20) protein is Proline--tRNA ligase.